A 279-amino-acid polypeptide reads, in one-letter code: Acetyl-coenzyme A carboxylase carboxyl transferase subunit beta (279 aa).

One can recognise a CoA carboxyltransferase N-terminal domain in the interval 23–279 (MWWKCDECGA…IVRLMTMLAP (257 aa)). 4 residues coordinate Zn(2+): Cys27, Cys30, Cys46, and Cys49. The C4-type zinc finger occupies 27–49 (CDECGAMLHKKQLEDNFYTCSEC).

It belongs to the AccD/PCCB family. As to quaternary structure, acetyl-CoA carboxylase is a heterohexamer composed of biotin carboxyl carrier protein (AccB), biotin carboxylase (AccC) and two subunits each of ACCase subunit alpha (AccA) and ACCase subunit beta (AccD). Requires Zn(2+) as cofactor.

The protein localises to the cytoplasm. The catalysed reaction is N(6)-carboxybiotinyl-L-lysyl-[protein] + acetyl-CoA = N(6)-biotinyl-L-lysyl-[protein] + malonyl-CoA. It participates in lipid metabolism; malonyl-CoA biosynthesis; malonyl-CoA from acetyl-CoA: step 1/1. Its function is as follows. Component of the acetyl coenzyme A carboxylase (ACC) complex. Biotin carboxylase (BC) catalyzes the carboxylation of biotin on its carrier protein (BCCP) and then the CO(2) group is transferred by the transcarboxylase to acetyl-CoA to form malonyl-CoA. The chain is Acetyl-coenzyme A carboxylase carboxyl transferase subunit beta from Chlorobium phaeobacteroides (strain DSM 266 / SMG 266 / 2430).